The following is a 417-amino-acid chain: Serine hydroxymethyltransferase (417 aa).

An N6-acetyllysine modification is found at K54. (6S)-5,6,7,8-tetrahydrofolate is bound by residues L121 and 125-127 (GHL). K229 carries the post-translational modification N6-(pyridoxal phosphate)lysine. 3 positions are modified to N6-acetyllysine: K250, K285, and K354. 355 to 357 (SPF) contacts (6S)-5,6,7,8-tetrahydrofolate. An N6-acetyllysine modification is found at K375.

This sequence belongs to the SHMT family. In terms of assembly, homodimer. Requires pyridoxal 5'-phosphate as cofactor.

It localises to the cytoplasm. It carries out the reaction (6R)-5,10-methylene-5,6,7,8-tetrahydrofolate + glycine + H2O = (6S)-5,6,7,8-tetrahydrofolate + L-serine. It functions in the pathway one-carbon metabolism; tetrahydrofolate interconversion. The protein operates within amino-acid biosynthesis; glycine biosynthesis; glycine from L-serine: step 1/1. Catalyzes the reversible interconversion of serine and glycine with tetrahydrofolate (THF) serving as the one-carbon carrier. This reaction serves as the major source of one-carbon groups required for the biosynthesis of purines, thymidylate, methionine, and other important biomolecules. Also exhibits THF-independent aldolase activity toward beta-hydroxyamino acids, producing glycine and aldehydes, via a retro-aldol mechanism. The sequence is that of Serine hydroxymethyltransferase from Escherichia coli O157:H7.